The primary structure comprises 368 residues: Carbamoyl phosphate synthase small chain (368 aa).

The tract at residues 1–178 (MKAVLGLEDG…GAECAWKGSG (178 aa)) is CPSase. Residues Ser-45, Gly-230, and Gly-232 each coordinate L-glutamine. Residues 182-368 (HAVVVDLGIK…KVVKVLGGDL (187 aa)) enclose the Glutamine amidotransferase type-1 domain. Cys-257 serves as the catalytic Nucleophile. The L-glutamine site is built by Phe-258, Gln-261, Asn-299, Gly-301, and Tyr-302. Residues His-342 and Glu-344 contribute to the active site.

This sequence belongs to the CarA family. Composed of two chains; the small (or glutamine) chain promotes the hydrolysis of glutamine to ammonia, which is used by the large (or ammonia) chain to synthesize carbamoyl phosphate. Tetramer of heterodimers (alpha,beta)4.

It catalyses the reaction hydrogencarbonate + L-glutamine + 2 ATP + H2O = carbamoyl phosphate + L-glutamate + 2 ADP + phosphate + 2 H(+). It carries out the reaction L-glutamine + H2O = L-glutamate + NH4(+). It functions in the pathway amino-acid biosynthesis; L-arginine biosynthesis; carbamoyl phosphate from bicarbonate: step 1/1. Its pathway is pyrimidine metabolism; UMP biosynthesis via de novo pathway; (S)-dihydroorotate from bicarbonate: step 1/3. Functionally, small subunit of the glutamine-dependent carbamoyl phosphate synthetase (CPSase). CPSase catalyzes the formation of carbamoyl phosphate from the ammonia moiety of glutamine, carbonate, and phosphate donated by ATP, constituting the first step of 2 biosynthetic pathways, one leading to arginine and/or urea and the other to pyrimidine nucleotides. The small subunit (glutamine amidotransferase) binds and cleaves glutamine to supply the large subunit with the substrate ammonia. This Methanosarcina acetivorans (strain ATCC 35395 / DSM 2834 / JCM 12185 / C2A) protein is Carbamoyl phosphate synthase small chain.